Consider the following 1044-residue polypeptide: AT-rich interactive domain-containing protein 5B (1044 aa).

8 disordered regions span residues 143 to 211, 301 to 350, 363 to 392, 554 to 591, 603 to 672, 733 to 767, 811 to 835, and 884 to 912; these read PRKK…GDEC, RFTK…GDKD, MEEL…LTED, NNYP…SSVE, QHAQ…SFLS, SQKE…LSTS, VSAS…RGEE, and TPLH…KPAE. Composition is skewed to basic and acidic residues over residues 197–211, 301–310, and 337–350; these read VQSE…GDEC, RFTKGEEDKP, and RPKD…GDKD. The region spanning 212-304 is the ARID domain; the sequence is RTDEQAFLVA…LILPYERFTK (93 aa). Residues 369 to 380 are compositionally biased toward polar residues; the sequence is KQNSQQLQAPTQ. Low complexity predominate over residues 565–591; it reads VSRRLSSSGTEVSSAGQSSSQVSSSVE. Composition is skewed to basic and acidic residues over residues 611 to 635, 644 to 660, and 733 to 746; these read RGSE…EPVH, PYLK…KSAE, and SQKE…RVTE. Over residues 752 to 767 the composition is skewed to low complexity; that stretch reads LSLPKSSPLKLPLSTS. Basic and acidic residues-rich tracts occupy residues 816-826 and 894-909; these read KVTESHSKVLE and LPGK…ESVK.

This sequence belongs to the ARID5B family.

Its subcellular location is the nucleus. Transcription coactivator that binds to the 5'-AATA[CT]-3' core sequence and plays a key role in adipogenesis and liver development. Required for adipogenesis: regulates triglyceride metabolism in adipocytes by regulating expression of adipogenic genes. The sequence is that of AT-rich interactive domain-containing protein 5B (arid5b) from Danio rerio (Zebrafish).